Consider the following 537-residue polypeptide: Multidrug resistance protein Stp (537 aa).

The next 14 membrane-spanning stretches (helical) occupy residues 6-26, 46-66, 77-97, 104-124, 136-156, 163-183, 200-220, 223-243, 262-282, 300-320, 327-347, 352-372, 397-417, and 478-498; these read LLTLIATGLGLFMIFLDALIV, WVVASYSLGMAVFIMSAATLA, IGVSLFTLGSIACGLAPSIAV, AQGLGAAAVSVTSLALVSAAF, IWTAIASIGTTTGPTLGGLLV, SIFYVNLPMGALVLFLTLCYV, LLFIVAVGALVYAVIEGPQIG, SVQTIVMLWTAAVGCALFVWL, YALAIATICTVFFAVYGMLLL, LMILPFSAAVAIVSPLVGHLV, VPILAGLCMLMLGLLMLIFSE, ALVLVGLGLCGSGVALCLTPI, AIGSTIGFAVLGSVLAAWLSA, and VALLVATATLAVVFLAGWRWF.

The protein belongs to the major facilitator superfamily. EmrB family.

It localises to the cell membrane. Functionally, contributes to spectinomycin and tetracycline resistance. The sequence is that of Multidrug resistance protein Stp (stp) from Mycobacterium tuberculosis (strain ATCC 25618 / H37Rv).